The following is a 718-amino-acid chain: Acetolactate synthase, mitochondrial (718 aa).

Disordered stretches follow at residues 1 to 50 (MLTR…APVY) and 72 to 101 (RKIQ…APQP). Residues 32–45 (RYSNNIHTSSTQNA) show a composition bias toward polar residues. Residues 76 to 99 (SSASTAAASPAVRPQPAQHFQAAP) show a composition bias toward low complexity. Glu-173 contacts thiamine diphosphate. Arg-275 is an FAD binding site. The disordered stretch occupies residues 296-327 (IPAKSAQPGHSPYLPSNPLNPSSQPSDPLPGD). Residues 306 to 325 (SPYLPSNPLNPSSQPSDPLP) are compositionally biased toward low complexity. Residues 397-418 (HGSA…LGVR) and 449-468 (EIQP…VLGD) each bind FAD. Residues 541–621 (QHQMWACQYY…VKVLLFNNEF (81 aa)) form a thiamine pyrophosphate binding region. Mg(2+) contacts are provided by Asp-592 and Asn-619.

Belongs to the TPP enzyme family. The cofactor is Mg(2+). Thiamine diphosphate is required as a cofactor.

Its subcellular location is the mitochondrion. The enzyme catalyses 2 pyruvate + H(+) = (2S)-2-acetolactate + CO2. It functions in the pathway amino-acid biosynthesis; L-isoleucine biosynthesis; L-isoleucine from 2-oxobutanoate: step 1/4. The protein operates within amino-acid biosynthesis; L-valine biosynthesis; L-valine from pyruvate: step 1/4. The chain is Acetolactate synthase, mitochondrial (ILV2) from Cryptococcus neoformans var. neoformans serotype D (strain JEC21 / ATCC MYA-565) (Filobasidiella neoformans).